We begin with the raw amino-acid sequence, 631 residues long: Chaperone protein HtpG (631 aa).

The a; substrate-binding stretch occupies residues 1-339; that stretch reads MSAQKETLGF…SNDLPLNVSR (339 aa). A b region spans residues 340 to 556; that stretch reads EILQESKDID…EHDMSAHLER (217 aa). The interval 557–631 is c; sequence MLKAAGQKIE…INKLMLELSV (75 aa).

The protein belongs to the heat shock protein 90 family. In terms of assembly, homodimer.

Its subcellular location is the cytoplasm. Functionally, molecular chaperone. Has ATPase activity. In Chromobacterium violaceum (strain ATCC 12472 / DSM 30191 / JCM 1249 / CCUG 213 / NBRC 12614 / NCIMB 9131 / NCTC 9757 / MK), this protein is Chaperone protein HtpG.